The following is a 180-amino-acid chain: Large ribosomal subunit protein uL5 (180 aa).

The protein belongs to the universal ribosomal protein uL5 family. Part of the 50S ribosomal subunit; part of the 5S rRNA/L5/L18/L25 subcomplex. Contacts the 5S rRNA and the P site tRNA. Forms a bridge to the 30S subunit in the 70S ribosome.

Its function is as follows. This is one of the proteins that bind and probably mediate the attachment of the 5S RNA into the large ribosomal subunit, where it forms part of the central protuberance. In the 70S ribosome it contacts protein S13 of the 30S subunit (bridge B1b), connecting the 2 subunits; this bridge is implicated in subunit movement. Contacts the P site tRNA; the 5S rRNA and some of its associated proteins might help stabilize positioning of ribosome-bound tRNAs. The chain is Large ribosomal subunit protein uL5 from Clostridium botulinum (strain ATCC 19397 / Type A).